We begin with the raw amino-acid sequence, 72 residues long: Translation initiation factor IF-1 1 (72 aa).

One can recognise an S1-like domain in the interval 1 to 72 (MSKDDVIQMQ…TRARIVFRSK (72 aa)).

The protein belongs to the IF-1 family. Component of the 30S ribosomal translation pre-initiation complex which assembles on the 30S ribosome in the order IF-2 and IF-3, IF-1 and N-formylmethionyl-tRNA(fMet); mRNA recruitment can occur at any time during PIC assembly.

The protein localises to the cytoplasm. In terms of biological role, one of the essential components for the initiation of protein synthesis. Stabilizes the binding of IF-2 and IF-3 on the 30S subunit to which N-formylmethionyl-tRNA(fMet) subsequently binds. Helps modulate mRNA selection, yielding the 30S pre-initiation complex (PIC). Upon addition of the 50S ribosomal subunit IF-1, IF-2 and IF-3 are released leaving the mature 70S translation initiation complex. The sequence is that of Translation initiation factor IF-1 1 from Bordetella avium (strain 197N).